Consider the following 565-residue polypeptide: Periplasmic trehalase (565 aa).

An N-terminal signal peptide occupies residues 1–30 (MKSPAPSRPQKMALIPACIFLCFAALSVQA). Substrate contacts are provided by residues R152, 159 to 160 (WD), N196, 205 to 207 (RSQ), 277 to 279 (RPE), and G310. Residues D312 and E496 each act as proton donor/acceptor in the active site. Residue E511 participates in substrate binding. The tract at residues 539–565 (CDNVPATRPLSESTTQPLKQKEAEPTP) is disordered.

It belongs to the glycosyl hydrolase 37 family. As to quaternary structure, monomer.

It is found in the periplasm. It catalyses the reaction alpha,alpha-trehalose + H2O = alpha-D-glucose + beta-D-glucose. Functionally, provides the cells with the ability to utilize trehalose at high osmolarity by splitting it into glucose molecules that can subsequently be taken up by the phosphotransferase-mediated uptake system. The chain is Periplasmic trehalase from Escherichia coli O1:K1 / APEC.